A 424-amino-acid chain; its full sequence is MIIIKNGYVIDPLTKREGKFDILIDGENVVRISQDIGIDDDIEVIDAEDCIVSPGFIDIHSHFRDPGFTEKEDIITGARAAARGGYTTVICMANTNPVVDNVETLRYIVDKAKTAKIEVLQVGTITKGMQGVELVDMEALKEAGAVGFSDDGKPIMDSRLVLEAMQKARELDVPLSFHEEDPKLVYESGINGGKVAEKLNMMGALEEAETVLTARDAALAVSSGAKTNIQHISSKISLGIIKLAKEMGANIIAEATPQHFSITEEEILNCGTNAKVNPPLRREDDRKAIVAALKDDTIQVIATDHAPHTKDEKAREFKEAPSGMIGLETALSLAVTNLVKTGDLTYRDMISKLTINPARFYNLDRGYIKEGHRADIVIFDPDEKYTVKEEEFQSKASNSPFIGKELFGKVKTTIYNGKIVYEDK.

Zn(2+) is bound by residues H60 and H62. Substrate-binding positions include 62-64 (HFR) and N94. Zn(2+)-binding residues include D151, H178, and H231. Substrate is bound at residue N277. Residue D304 coordinates Zn(2+). D304 is an active-site residue. H308 serves as a coordination point for substrate.

It belongs to the metallo-dependent hydrolases superfamily. DHOase family. Class I DHOase subfamily. Zn(2+) is required as a cofactor.

The catalysed reaction is (S)-dihydroorotate + H2O = N-carbamoyl-L-aspartate + H(+). It functions in the pathway pyrimidine metabolism; UMP biosynthesis via de novo pathway; (S)-dihydroorotate from bicarbonate: step 3/3. Functionally, catalyzes the reversible cyclization of carbamoyl aspartate to dihydroorotate. The protein is Dihydroorotase of Clostridium acetobutylicum (strain ATCC 824 / DSM 792 / JCM 1419 / IAM 19013 / LMG 5710 / NBRC 13948 / NRRL B-527 / VKM B-1787 / 2291 / W).